A 213-amino-acid polypeptide reads, in one-letter code: UPF0319 protein HAPS_0727 (213 aa).

An N-terminal signal peptide occupies residues 1–21 (MKLGKIALAMTALIAGTTAFA).

Belongs to the UPF0319 family.

The protein is UPF0319 protein HAPS_0727 of Glaesserella parasuis serovar 5 (strain SH0165) (Haemophilus parasuis).